Consider the following 153-residue polypeptide: Arachidonate 5-lipoxygenase-activating protein (153 aa).

Residues 1-8 lie on the Lumenal side of the membrane; that stretch reads MDQETVGN. A helical transmembrane segment spans residues 9 to 30; it reads VVLLAIVTLISVVQNGFFAHKV. Residues 31–52 lie on the Cytoplasmic side of the membrane; that stretch reads EHESRTQNGRSFQRTGTLAFER. A helical transmembrane segment spans residues 53-77; that stretch reads VYTANQNCVDAYPTFLAVLWSAGLL. Topologically, residues 78-80 are lumenal; sequence CSQ. A helical membrane pass occupies residues 81–102; sequence VPAAFAGLMYLLVRQKYFVGYL. The Cytoplasmic segment spans residues 103–107; sequence GERTQ. An intramembrane segment occupies 108 to 115; sequence STPGYIFG. The helical transmembrane segment at 116 to 128 threads the bilayer; the sequence is KRIILFLFLMSVA. At 129–153 the chain is on the lumenal side; that stretch reads GIFNYYLIFFFGSDFENYIKTVTTT.

It belongs to the MAPEG family. As to quaternary structure, homotrimer. Interacts with LTC4S and ALOX5.

Its subcellular location is the nucleus membrane. The protein resides in the endoplasmic reticulum membrane. Functionally, required for leukotriene biosynthesis by ALOX5 (5-lipoxygenase). Anchors ALOX5 to the membrane. Binds arachidonic acid, and could play an essential role in the transfer of arachidonic acid to ALOX5. Binds to MK-886, a compound that blocks the biosynthesis of leukotrienes. This Macaca mulatta (Rhesus macaque) protein is Arachidonate 5-lipoxygenase-activating protein (ALOX5AP).